Here is a 604-residue protein sequence, read N- to C-terminus: Ribosome-inactivating protein PMRIPm (604 aa).

Residues 1-43 (MRVVAAILYINVVVALICGLGIQGGALDLQDYPSVSFQGDAMQ) form the signal peptide. The active site involves Glu211. Cystine bridges form between Cys301–Cys332, Cys348–Cys367, and Cys392–Cys409. Ricin B-type lectin domains are found at residues 335 to 463 (GEPT…WRVG) and 466 to 598 (VEPI…WLTV). The stretch at 345 to 387 (AGWCVDVKDGRDNDGNPIQVLSCGDGQERKQQWTFHRDGTIRS) is one 1-alpha repeat. Residues 389–429 (LGKCMTAYGFKHGEYVMIYDCDTAIAGANKWVVSIDGTITN) form a 1-beta repeat. One copy of the 1-gamma repeat lies at 432-465 (SGLVLTAPRGATGTTLLVEKNVHAARQCWRVGDD). The stretch at 477–521 (QEKCLEANYLENTNVSRYTKVFLDDCVLDRQQQRWALYSDGTIRA) is one 2-alpha repeat. A disulfide bridge connects residues Cys480 and Cys502. Residue Asn490 is glycosylated (N-linked (GlcNAc...) asparagine). A 2-beta repeat occupies 525–563 (RSLRVTADGHRSLDSIIILACKGWGNQRWVFNTDGTILN). One copy of the 2-gamma repeat lies at 566–599 (AKLVMDVKDSDVSLLQIILHQSTGKPNQKWLTVT).

This sequence belongs to the ribosome-inactivating protein family. Type 2 RIP subfamily. In terms of assembly, disulfide-linked dimer of A and B chains. Post-translationally, the precursor is processed in two chains, A and B, that are linked by a disulfide bond. In terms of processing, glycosylated. The N-terminus is blocked. In terms of tissue distribution, expressed in rhizome and abundantly in leaves (at protein level).

It carries out the reaction Endohydrolysis of the N-glycosidic bond at one specific adenosine on the 28S rRNA.. Strongly inhibited by asialofetuin and asialomucin. Gal/GalNAc-specific agglutinin. Behaves as a type-2 ribosome-inactivating protein. Inhibits mammalian ribosomes. The A chain is responsible for inhibiting protein synthesis through the catalytic inactivation of 60S ribosomal subunits by removing adenine from position 4,324 of 28S rRNA. The B chain binds to cell receptors and probably facilitates the entry into the cell of the A chain; B chains are also responsible for cell agglutination (lectin activity). Involved in plant defense against insects. Has very low cytotoxic activity against the human tumor cell line Molt4, but higher against CEM. This Polygonatum multiflorum (Solomon's seal) protein is Ribosome-inactivating protein PMRIPm.